Here is a 1193-residue protein sequence, read N- to C-terminus: Major DNA-binding protein (1193 aa).

The Required for filament formation motif lies at 827 to 828; that stretch reads FW. The disordered stretch occupies residues 1125 to 1145; it reads AGGGPAGSAGGPESGGGAGAA. A required for nuclear localization region spans residues 1170-1193; sequence PTAAALDGGGDGDECAFPAKRLRL.

This sequence belongs to the herpesviridae major DNA-binding protein family. As to quaternary structure, homooligomers. Forms double-helical filaments necessary for the formation of replication compartments within the host nucleus. Interacts with the origin-binding protein. Interacts with the helicase primase complex; this interaction stimulates primer synthesis activity of the helicase-primase complex. Interacts with the DNA polymerase. Interacts with the alkaline exonuclease; this interaction increases its nuclease processivity.

It localises to the host nucleus. Plays several crucial roles in viral infection. Participates in the opening of the viral DNA origin to initiate replication by interacting with the origin-binding protein. May disrupt loops, hairpins and other secondary structures present on ssDNA to reduce and eliminate pausing of viral DNA polymerase at specific sites during elongation. Promotes viral DNA recombination by performing strand-transfer, characterized by the ability to transfer a DNA strand from a linear duplex to a complementary single-stranded DNA circle. Can also catalyze the renaturation of complementary single strands. Additionally, reorganizes the host cell nucleus, leading to the formation of prereplicative sites and replication compartments. This process is driven by the protein which can form double-helical filaments in the absence of DNA. The protein is Major DNA-binding protein of Tupaiid herpesvirus (strain 2) (TuHV-2).